We begin with the raw amino-acid sequence, 278 residues long: Acyl-[acyl-carrier-protein]--UDP-N-acetylglucosamine O-acyltransferase (278 aa).

It belongs to the transferase hexapeptide repeat family. LpxA subfamily. As to quaternary structure, homotrimer.

It localises to the cytoplasm. The catalysed reaction is a (3R)-hydroxyacyl-[ACP] + UDP-N-acetyl-alpha-D-glucosamine = a UDP-3-O-[(3R)-3-hydroxyacyl]-N-acetyl-alpha-D-glucosamine + holo-[ACP]. It functions in the pathway glycolipid biosynthesis; lipid IV(A) biosynthesis; lipid IV(A) from (3R)-3-hydroxytetradecanoyl-[acyl-carrier-protein] and UDP-N-acetyl-alpha-D-glucosamine: step 1/6. Its function is as follows. Involved in the biosynthesis of lipid A, a phosphorylated glycolipid that anchors the lipopolysaccharide to the outer membrane of the cell. The polypeptide is Acyl-[acyl-carrier-protein]--UDP-N-acetylglucosamine O-acyltransferase (Brucella abortus (strain S19)).